A 216-amino-acid chain; its full sequence is MOB kinase activator 3B (216 aa).

The Zn(2+) site is built by C82, C87, H164, and H169.

Functionally, modulates LATS1 expression in the Hippo signaling pathway which plays a pivotal role in organ size control and tumor suppression by restricting proliferation and promoting apoptosis. This Mus musculus (Mouse) protein is MOB kinase activator 3B (Mob3b).